We begin with the raw amino-acid sequence, 447 residues long: Exodeoxyribonuclease 7 large subunit (447 aa).

The protein belongs to the XseA family. Heterooligomer composed of large and small subunits.

Its subcellular location is the cytoplasm. It catalyses the reaction Exonucleolytic cleavage in either 5'- to 3'- or 3'- to 5'-direction to yield nucleoside 5'-phosphates.. In terms of biological role, bidirectionally degrades single-stranded DNA into large acid-insoluble oligonucleotides, which are then degraded further into small acid-soluble oligonucleotides. This is Exodeoxyribonuclease 7 large subunit from Streptococcus mutans serotype c (strain ATCC 700610 / UA159).